We begin with the raw amino-acid sequence, 291 residues long: Ribosomal RNA small subunit methyltransferase H (291 aa).

Residues 31-33, aspartate 50, phenylalanine 77, aspartate 98, and glutamine 105 each bind S-adenosyl-L-methionine; that span reads GGH.

It belongs to the methyltransferase superfamily. RsmH family.

It localises to the cytoplasm. The enzyme catalyses cytidine(1402) in 16S rRNA + S-adenosyl-L-methionine = N(4)-methylcytidine(1402) in 16S rRNA + S-adenosyl-L-homocysteine + H(+). Specifically methylates the N4 position of cytidine in position 1402 (C1402) of 16S rRNA. The polypeptide is Ribosomal RNA small subunit methyltransferase H (Endomicrobium trichonymphae).